We begin with the raw amino-acid sequence, 91 residues long: Small ribosomal subunit protein uS15 (91 aa).

This sequence belongs to the universal ribosomal protein uS15 family. As to quaternary structure, part of the 30S ribosomal subunit. Forms a bridge to the 50S subunit in the 70S ribosome, contacting the 23S rRNA.

Functionally, one of the primary rRNA binding proteins, it binds directly to 16S rRNA where it helps nucleate assembly of the platform of the 30S subunit by binding and bridging several RNA helices of the 16S rRNA. Its function is as follows. Forms an intersubunit bridge (bridge B4) with the 23S rRNA of the 50S subunit in the ribosome. The sequence is that of Small ribosomal subunit protein uS15 from Rickettsia typhi (strain ATCC VR-144 / Wilmington).